Consider the following 430-residue polypeptide: Serine--tRNA ligase (430 aa).

236-238 (TAE) is an L-serine binding site. 267–269 (RSE) lines the ATP pocket. Glutamate 290 contacts L-serine. 354-357 (EISS) contacts ATP. Residue serine 390 coordinates L-serine.

The protein belongs to the class-II aminoacyl-tRNA synthetase family. Type-1 seryl-tRNA synthetase subfamily. As to quaternary structure, homodimer. The tRNA molecule binds across the dimer.

Its subcellular location is the cytoplasm. It catalyses the reaction tRNA(Ser) + L-serine + ATP = L-seryl-tRNA(Ser) + AMP + diphosphate + H(+). It carries out the reaction tRNA(Sec) + L-serine + ATP = L-seryl-tRNA(Sec) + AMP + diphosphate + H(+). The protein operates within aminoacyl-tRNA biosynthesis; selenocysteinyl-tRNA(Sec) biosynthesis; L-seryl-tRNA(Sec) from L-serine and tRNA(Sec): step 1/1. Its function is as follows. Catalyzes the attachment of serine to tRNA(Ser). Is also able to aminoacylate tRNA(Sec) with serine, to form the misacylated tRNA L-seryl-tRNA(Sec), which will be further converted into selenocysteinyl-tRNA(Sec). The chain is Serine--tRNA ligase from Idiomarina loihiensis (strain ATCC BAA-735 / DSM 15497 / L2-TR).